The primary structure comprises 301 residues: GTPase Era (301 aa).

The 169-residue stretch at 7-175 (YCGFIAIVGR…AAIVRKHLPE (169 aa)) folds into the Era-type G domain. The tract at residues 15–22 (GRPNVGKS) is G1. Position 15 to 22 (15 to 22 (GRPNVGKS)) interacts with GTP. The tract at residues 41–45 (QTTRH) is G2. The segment at 62-65 (DTPG) is G3. GTP is bound by residues 62–66 (DTPGL) and 124–127 (NKVD). Residues 124–127 (NKVD) form a G4 region. The interval 154–156 (ISA) is G5. The KH type-2 domain maps to 206–283 (LGAELPYSVT…HLELWVKVKS (78 aa)).

It belongs to the TRAFAC class TrmE-Era-EngA-EngB-Septin-like GTPase superfamily. Era GTPase family. Monomer.

The protein localises to the cytoplasm. The protein resides in the cell inner membrane. An essential GTPase that binds both GDP and GTP, with rapid nucleotide exchange. Plays a role in 16S rRNA processing and 30S ribosomal subunit biogenesis and possibly also in cell cycle regulation and energy metabolism. The polypeptide is GTPase Era (Escherichia coli O1:K1 / APEC).